We begin with the raw amino-acid sequence, 281 residues long: Fructose-bisphosphate aldolase class 1 (281 aa).

Residue lysine 191 is the Schiff-base intermediate with dihydroxyacetone-P of the active site.

Belongs to the DeoC/FbaB aldolase family. Homooctamer.

Its subcellular location is the cytoplasm. The protein localises to the chromosome. It catalyses the reaction beta-D-fructose 1,6-bisphosphate = D-glyceraldehyde 3-phosphate + dihydroxyacetone phosphate. Its activity is regulated as follows. Activated by citrate. In Thermococcus kodakarensis (strain ATCC BAA-918 / JCM 12380 / KOD1) (Pyrococcus kodakaraensis (strain KOD1)), this protein is Fructose-bisphosphate aldolase class 1 (fba).